We begin with the raw amino-acid sequence, 140 residues long: Methylglyoxal synthase (140 aa).

Positions 1–140 (MNIALIAHDE…KERQEKEGTP (140 aa)) constitute an MGS-like domain. Residues His8, Lys12, 34–37 (TGTT), and 54–55 (SG) contribute to the substrate site. The active-site Proton donor/acceptor is Asp60. His87 is a substrate binding site.

This sequence belongs to the methylglyoxal synthase family.

It catalyses the reaction dihydroxyacetone phosphate = methylglyoxal + phosphate. Catalyzes the formation of methylglyoxal from dihydroxyacetone phosphate. The sequence is that of Methylglyoxal synthase from Oceanobacillus iheyensis (strain DSM 14371 / CIP 107618 / JCM 11309 / KCTC 3954 / HTE831).